We begin with the raw amino-acid sequence, 483 residues long: Membrane-bound lytic murein transglycosylase F (483 aa).

An N-terminal signal peptide occupies residues 1 to 18 (MKGLVIRISVALALLLWA). The segment at 19–270 (VDMVFPWQQI…RIEEKYFSHI (252 aa)) is non-LT domain. The tract at residues 272–483 (QFDYVDIKSY…IMITPQNSQD (212 aa)) is LT domain. Residue E315 is part of the active site.

In the N-terminal section; belongs to the bacterial solute-binding protein 3 family. It in the C-terminal section; belongs to the transglycosylase Slt family.

The protein resides in the cell outer membrane. The catalysed reaction is Exolytic cleavage of the (1-&gt;4)-beta-glycosidic linkage between N-acetylmuramic acid (MurNAc) and N-acetylglucosamine (GlcNAc) residues in peptidoglycan, from either the reducing or the non-reducing ends of the peptidoglycan chains, with concomitant formation of a 1,6-anhydrobond in the MurNAc residue.. In terms of biological role, murein-degrading enzyme that degrades murein glycan strands and insoluble, high-molecular weight murein sacculi, with the concomitant formation of a 1,6-anhydromuramoyl product. Lytic transglycosylases (LTs) play an integral role in the metabolism of the peptidoglycan (PG) sacculus. Their lytic action creates space within the PG sacculus to allow for its expansion as well as for the insertion of various structures such as secretion systems and flagella. The sequence is that of Membrane-bound lytic murein transglycosylase F from Actinobacillus succinogenes (strain ATCC 55618 / DSM 22257 / CCUG 43843 / 130Z).